The chain runs to 398 residues: NADH-ubiquinone oxidoreductase 49 kDa subunit (398 aa).

The protein belongs to the complex I 49 kDa subunit family.

Its subcellular location is the mitochondrion. The catalysed reaction is a ubiquinone + NADH + 5 H(+)(in) = a ubiquinol + NAD(+) + 4 H(+)(out). In terms of biological role, core subunit of the mitochondrial membrane respiratory chain NADH dehydrogenase (Complex I) that is believed to belong to the minimal assembly required for catalysis. Complex I functions in the transfer of electrons from NADH to the respiratory chain. The immediate electron acceptor for the enzyme is believed to be ubiquinone. Component of the iron-sulfur (IP) fragment of the enzyme. Component of the iron-sulfur (IP) fragment of the enzyme. The sequence is that of NADH-ubiquinone oxidoreductase 49 kDa subunit (NAD7) from Cafeteria roenbergensis (Marine flagellate).